The primary structure comprises 170 residues: Crossover junction endodeoxyribonuclease RuvC (170 aa).

Residues Asp11, Glu71, and Asp143 contribute to the active site. 3 residues coordinate Mg(2+): Asp11, Glu71, and Asp143.

The protein belongs to the RuvC family. In terms of assembly, homodimer which binds Holliday junction (HJ) DNA. The HJ becomes 2-fold symmetrical on binding to RuvC with unstacked arms; it has a different conformation from HJ DNA in complex with RuvA. In the full resolvosome a probable DNA-RuvA(4)-RuvB(12)-RuvC(2) complex forms which resolves the HJ. The cofactor is Mg(2+).

Its subcellular location is the cytoplasm. It carries out the reaction Endonucleolytic cleavage at a junction such as a reciprocal single-stranded crossover between two homologous DNA duplexes (Holliday junction).. The RuvA-RuvB-RuvC complex processes Holliday junction (HJ) DNA during genetic recombination and DNA repair. Endonuclease that resolves HJ intermediates. Cleaves cruciform DNA by making single-stranded nicks across the HJ at symmetrical positions within the homologous arms, yielding a 5'-phosphate and a 3'-hydroxyl group; requires a central core of homology in the junction. The consensus cleavage sequence is 5'-(A/T)TT(C/G)-3'. Cleavage occurs on the 3'-side of the TT dinucleotide at the point of strand exchange. HJ branch migration catalyzed by RuvA-RuvB allows RuvC to scan DNA until it finds its consensus sequence, where it cleaves and resolves the cruciform DNA. This Agrobacterium fabrum (strain C58 / ATCC 33970) (Agrobacterium tumefaciens (strain C58)) protein is Crossover junction endodeoxyribonuclease RuvC.